Reading from the N-terminus, the 133-residue chain is MIVGLGNDLIDIRRIERMLVRYGDRFVQRIFTDIEQNKSESLQKKSSSYAKRFAAKEACAKALGTGIACGVNWKDMGVINLPSGKPIMKLTNRAQMQLQKLLPLHHDAIIHLSMTDDFPWAQAFIIIEALPRG.

Mg(2+) is bound by residues Asp8 and Glu57.

It belongs to the P-Pant transferase superfamily. AcpS family. Mg(2+) serves as cofactor.

Its subcellular location is the cytoplasm. It carries out the reaction apo-[ACP] + CoA = holo-[ACP] + adenosine 3',5'-bisphosphate + H(+). Functionally, transfers the 4'-phosphopantetheine moiety from coenzyme A to a Ser of acyl-carrier-protein. This Bartonella quintana (strain Toulouse) (Rochalimaea quintana) protein is Holo-[acyl-carrier-protein] synthase.